The sequence spans 316 residues: Adenine deaminase (316 aa).

Residues H14, H16, and H194 each contribute to the Zn(2+) site. Catalysis depends on E197, which acts as the Proton donor. Zn(2+) is bound at residue D275. Residue D276 coordinates substrate.

It belongs to the metallo-dependent hydrolases superfamily. Adenosine and AMP deaminases family. Adenine deaminase type 2 subfamily. It depends on Zn(2+) as a cofactor.

The enzyme catalyses adenine + H2O + H(+) = hypoxanthine + NH4(+). Its function is as follows. Catalyzes the hydrolytic deamination of adenine to hypoxanthine. Plays an important role in the purine salvage pathway and in nitrogen catabolism. The chain is Adenine deaminase from Pseudomonas entomophila (strain L48).